Here is a 165-residue protein sequence, read N- to C-terminus: Crossover junction endodeoxyribonuclease RuvC (165 aa).

Active-site residues include Asp-7, Glu-67, and Asp-140. Mg(2+) is bound by residues Asp-7, Glu-67, and Asp-140.

The protein belongs to the RuvC family. Homodimer which binds Holliday junction (HJ) DNA. The HJ becomes 2-fold symmetrical on binding to RuvC with unstacked arms; it has a different conformation from HJ DNA in complex with RuvA. In the full resolvosome a probable DNA-RuvA(4)-RuvB(12)-RuvC(2) complex forms which resolves the HJ. The cofactor is Mg(2+).

The protein resides in the cytoplasm. The enzyme catalyses Endonucleolytic cleavage at a junction such as a reciprocal single-stranded crossover between two homologous DNA duplexes (Holliday junction).. The RuvA-RuvB-RuvC complex processes Holliday junction (HJ) DNA during genetic recombination and DNA repair. Endonuclease that resolves HJ intermediates. Cleaves cruciform DNA by making single-stranded nicks across the HJ at symmetrical positions within the homologous arms, yielding a 5'-phosphate and a 3'-hydroxyl group; requires a central core of homology in the junction. The consensus cleavage sequence is 5'-(A/T)TT(C/G)-3'. Cleavage occurs on the 3'-side of the TT dinucleotide at the point of strand exchange. HJ branch migration catalyzed by RuvA-RuvB allows RuvC to scan DNA until it finds its consensus sequence, where it cleaves and resolves the cruciform DNA. The protein is Crossover junction endodeoxyribonuclease RuvC of Desulfitobacterium hafniense (strain DSM 10664 / DCB-2).